The sequence spans 356 residues: MASLTDLVNLNLSDTTEKIIAEYIWIGGSGMDLRSKARTLSGPVTDPSKLPKWNYDGSSTGQAPGEDSEVILYPQAIFKDPFRKGNNILVMCDCYTPAGEPIPTNKRHNAAKIFSSPEVASEEPWYGIEQEYTLLQKDINWPLGWPVGGFPGPQGPYYCGIGADKSFGRDIVDSHYKACLYAGINISGINGEVMPGQWEFQVGPSVGISAGDQVWVARYILERITEIAGVVVSFDPKPIPGDWNGAGAHTNYSTKSMRNDGGYEIIKSAIEKLKLRHKEHISAYGEGNERRLTGRHETADINTFSWGVANRGASVRVGRETEQNGKGYFEDRRPASNMDPYIVTSMIAETTIIWKP.

The region spanning 19-99 is the GS beta-grasp domain; the sequence is IIAEYIWIGG…VMCDCYTPAG (81 aa). Positions 106–356 constitute a GS catalytic domain; it reads KRHNAAKIFS…IAETTIIWKP (251 aa).

Belongs to the glutamine synthetase family. In terms of assembly, homooctamer. Highly expressed in leaf blades, at intermediate levels in spikelets (rice flower) and at lower levels in roots.

The protein resides in the cytoplasm. The enzyme catalyses L-glutamate + NH4(+) + ATP = L-glutamine + ADP + phosphate + H(+). Functionally, high-affinity glutamine synthetase involved in ammonium assimilation. Seems to be a major component of the cytosolic glutamine synthetic pathway in leaf blades. Plays an important role in maintaining carbon and nitrogen metabolic balance during ammonium assimilation in shoots and roots, thus controlling plant growth and development. Plays an important role in maintaining broad range of metabolites and transcripts involved in the maintenance of plant metabolic homeostasis and development of plastid in roots. The chain is Glutamine synthetase cytosolic isozyme 1-1 from Oryza sativa subsp. japonica (Rice).